The sequence spans 770 residues: Signal transducer and activator of transcription 3 (770 aa).

Ala-2 bears the N-acetylalanine mark. N6-acetyllysine occurs at positions 49 and 87. Residues Asp-150–Met-162 carry the Essential for nuclear import motif. The region spanning Trp-580–Leu-670 is the SH2 domain. Lys-601, Lys-615, and Lys-631 each carry allysine; alternate. 3 positions are modified to N6-acetyllysine; alternate: Lys-601, Lys-615, and Lys-631. Tyr-640 carries the post-translational modification Phosphotyrosine; by TYK2. Lys-685 is modified (allysine; alternate). Lys-685 is subject to N6-acetyllysine; alternate. Tyr-705 carries the post-translational modification Phosphotyrosine; by FER and PTK6. The residue at position 707 (Lys-707) is an N6-acetyllysine. The residue at position 714 (Thr-714) is a Phosphothreonine. Ser-727 is subject to Phosphoserine; by DYRK2, NLK, NEK6, IRAK1, RPS6KA5, ZIPK/DAPK3 and PKC/PRKCE.

The protein belongs to the transcription factor STAT family. In terms of assembly, forms a homodimer or a heterodimer with a related family member (at least STAT1). Component of a promoter-binding complex composed of STAT3, NFATC3 and NFATC4; complex formation is enhanced by calcineurin. Interacts with IL31RA, NCOA1, PELP1, SIPAR, SOCS7, STATIP1 and TMF1. Interacts with IL23R in presence of IL23. Interacts (via SH2 domain) with NLK. Interacts with ARL2BP; the interaction is enhanced by LIF and JAK1 expression. Interacts with KPNA4 and KPNA5; KPNA4 may be the primary mediator of nuclear import. Interacts with CAV2; the interaction is increased on insulin-induced tyrosine phosphorylation of CAV2 and leads to STAT3 activation. Interacts with ARL2BP; interaction is enhanced with ARL2. Interacts with NEK6. Binds to CDK9 when activated and nuclear. Interacts with BMX. Interacts with ZIPK/DAPK3. Interacts with PIAS3; the interaction occurs on stimulation by IL6, CNTF or OSM and inhibits the DNA binding activity of STAT3. In prostate cancer cells, interacts with PRKCE and promotes DNA binding activity of STAT3. Interacts with STMN3, antagonizing its microtubule-destabilizing activity. Interacts with the 'Lys-129' acetylated form of BIRC5/survivin. Interacts with FER. Interacts (via SH2 domain) with EIF2AK2/PKR (via the kinase catalytic domain). Interacts with FGFR4. Interacts with INPP5F; the interaction is independent of STAT3 Tyr-705 phosphorylation status. Interacts with OCIAD1. Interacts with OCIAD2. Interacts (unphosphorylated or phosphorylated at Ser-727) with PHB1. Interacts and may form heterodimers with NHLH1. Found in a complex with SLC39A6, SLC39A10 and with the 'Ser-727' phosphorylated form of STAT3 throughout mitosis. Interacts (when acetylated) with EP300 (via bromo domain); interaction takes place following STAT3 acetylation by EP300 and promotes enhanceosome assembly. Interacts (when acetylated) with BRD2 (via bromo domain); interaction promotes STAT3 recruitment to chromatin and T-helper Th17 cell differentiation. Interacts with FAM220A/SIPAR; the interaction occurs in both the nucleus and the cytoplasm, is enhanced by IL6 and promotes STAT3 dephosphorylation. Interacts in both unphosphorylated and phosphorylated forms with FAM220A but interacts preferentially in the phosphorylated form in the nucleus. Interacts with PTPN2; the interaction is promoted by FAM220A and leads to STAT3 dephosphorylation which negatively regulates STAT3 transcriptional activator activity. Post-translationally, activated through tyrosine phosphorylation by BMX. Tyrosine phosphorylated in response to IL6, IL11, CNTF, LIF, KITLG/SCF, CSF1, EGF, PDGF, IFN-alpha, LEP and OSM. Activated KIT promotes phosphorylation on tyrosine residues and subsequent translocation to the nucleus. Tyrosine phosphorylated in response to constitutively activated FGFR1, FGFR2, FGFR3 and FGFR4. Phosphorylated on serine upon DNA damage, probably by ATM or ATR. Serine phosphorylation is important for the formation of stable DNA-binding STAT3 homodimers and maximal transcriptional activity. ARL2BP may participate in keeping the phosphorylated state of STAT3 within the nucleus. Tyrosine phosphorylated upon stimulation with EGF. Upon LPS challenge, phosphorylated within the nucleus by IRAK1. Upon UV-A treatment, phosphorylated on Ser-727 by RPS6KA5. Dephosphorylation on tyrosine residues by PTPN2 negatively regulates IL6/interleukin-6 signaling. Phosphorylation at Tyr-705 by PTK6, isoform M2 of PKM (PKM2) or FER leads to an increase of its transcriptional activity. Phosphorylation at Tyr-705 is increased in the presence of calcineurin. Phosphorylation at Tyr-640 by TYK2 negatively regulates transcriptional activity. Acetylated on lysine residues by EP300/p300, promoting its activation. Acetylation at Lys-49 and Lys-87 by EP300/p300 promotes its activation. Acetylation at Lys-87 by EP300/p300 promotes its association with BRD2 and recruitment to chromatin. Deacetylated at Lys-49 and Lys-87 by HDAC1. Acetylation at Lys-685 by EP300/p300 promotes its homodimerization and activation. Deacetylated at Lys-685 by HDAC3. Acetylated on lysine residues by CREBBP. Deacetylation by LOXL3 leads to disrupt STAT3 dimerization and inhibit STAT3 transcription activity. Oxidation of lysine residues to allysine on STAT3 preferentially takes place on lysine residues that are acetylated. In terms of processing, some lysine residues are oxidized to allysine by LOXL3, leading to disrupt STAT3 dimerization and inhibit STAT3 transcription activity. Oxidation of lysine residues to allysine on STAT3 preferentially takes place on lysine residues that are acetylated. Post-translationally, (Microbial infection) Phosphorylated on Tyr-705 in the presence of S.typhimurium SarA. As to expression, expressed in ventricular cardiomyocytes (at protein level). Expressed in the lung (at protein level). Expressed in the liver, spleen and kidney. Expressed in the liver.

The protein resides in the cytoplasm. It localises to the nucleus. In terms of biological role, signal transducer and transcription activator that mediates cellular responses to interleukins, KITLG/SCF, LEP and other growth factors. Once activated, recruits coactivators, such as NCOA1 or MED1, to the promoter region of the target gene. May mediate cellular responses to activated FGFR1, FGFR2, FGFR3 and FGFR4. Upon activation of IL6ST/gp130 signaling by interleukin-6 (IL6), binds to the IL6-responsive elements identified in the promoters of various acute-phase protein genes. Activated by IL31 through IL31RA. Acts as a regulator of inflammatory response by regulating differentiation of naive CD4(+) T-cells into T-helper Th17 or regulatory T-cells (Treg): acetylation promotes its transcription activity and cell differentiation while deacetylation and oxidation of lysine residues by LOXL3 inhibits differentiation. Involved in cell cycle regulation by inducing the expression of key genes for the progression from G1 to S phase, such as CCND1. Mediates the effects of LEP on melanocortin production, body energy homeostasis and lactation. May play an apoptotic role by transctivating BIRC5 expression under LEP activation. Cytoplasmic STAT3 represses macroautophagy by inhibiting EIF2AK2/PKR activity. Plays a crucial role in basal beta cell functions, such as regulation of insulin secretion. Following JAK/STAT signaling activation and as part of a complex with NFATC3 and NFATC4, binds to the alpha-beta E4 promoter region of CRYAB and activates transcription in cardiomyocytes. Plays an important role in host defense in methicillin-resistant S.aureus lung infection by regulating the expression of the antimicrobial lectin REG3G. The sequence is that of Signal transducer and activator of transcription 3 from Mus musculus (Mouse).